Consider the following 211-residue polypeptide: Protein-methionine-sulfoxide reductase heme-binding subunit MsrQ (211 aa).

4 helical membrane passes run leucine 17–alanine 37, leucine 82–valine 102, proline 116–threonine 136, and phenylalanine 153–serine 173.

This sequence belongs to the MsrQ family. Heterodimer of a catalytic subunit (MsrP) and a heme-binding subunit (MsrQ). FMN serves as cofactor. It depends on heme b as a cofactor.

It localises to the cell inner membrane. Part of the MsrPQ system that repairs oxidized periplasmic proteins containing methionine sulfoxide residues (Met-O), using respiratory chain electrons. Thus protects these proteins from oxidative-stress damage caused by reactive species of oxygen and chlorine generated by the host defense mechanisms. MsrPQ is essential for the maintenance of envelope integrity under bleach stress, rescuing a wide series of structurally unrelated periplasmic proteins from methionine oxidation, including the primary periplasmic chaperone SurA and the lipoprotein Pal. MsrQ provides electrons for reduction to the reductase catalytic subunit MsrP, using the quinone pool of the respiratory chain. The chain is Protein-methionine-sulfoxide reductase heme-binding subunit MsrQ from Shigella boydii serotype 18 (strain CDC 3083-94 / BS512).